Here is a 350-residue protein sequence, read N- to C-terminus: Sodium/calcium exchanger MaX1 (350 aa).

Transmembrane regions (helical) follow at residues 4–24 (VNFL…DYFV), 39–59 (FVIG…ASSI), 69–89 (IVIG…VGVA), 101–121 (MLKR…VFAF), 125–145 (LSML…FFLF), 202–222 (GGFA…VIGA), 242–264 (VIGT…VSAA), 276–296 (VIGS…LFYP), 302–322 (MSLF…LIFI), and 330–350 (RWEG…LFYI).

Belongs to the Ca(2+):cation antiporter (CaCA) (TC 2.A.19) family.

It is found in the cell membrane. Calcium transport is inhibited by Na(+), K(+), Li(+), Mg(2+) or Mn(2+). Functionally, catalyzes Na(+)/Ca(2+) exchange. The transport is electrogenic with a likely stoichiometry of 3 or more Na(+) for each Ca(2+). Is K(+)-independent. The polypeptide is Sodium/calcium exchanger MaX1 (maX1) (Methanosarcina acetivorans (strain ATCC 35395 / DSM 2834 / JCM 12185 / C2A)).